The primary structure comprises 734 residues: Photosystem I P700 chlorophyll a apoprotein A2 (734 aa).

Helical transmembrane passes span 46–69 (IFAS…FHVA), 135–158 (LYTG…LHLQ), 175–199 (LNHH…HVAI), 273–291 (IAHH…GHMY), 330–353 (IHFQ…QHMY), 369–395 (AALY…IFFI), 417–439 (AIIS…LYVH), and 517–535 (FLVH…LILV). Positions 559 and 568 each coordinate [4Fe-4S] cluster. Transmembrane regions (helical) follow at residues 575-596 (AFYL…YWHW) and 643-665 (LSVW…MFLI). 3 residues coordinate chlorophyll a: H654, M662, and Y670. Residue W671 participates in phylloquinone binding. The helical transmembrane segment at 707–727 (LVGLAHFSVGYIFTYAAFLIA) threads the bilayer.

Belongs to the PsaA/PsaB family. The PsaA/B heterodimer binds the P700 chlorophyll special pair and subsequent electron acceptors. PSI consists of a core antenna complex that captures photons, and an electron transfer chain that converts photonic excitation into a charge separation. The eukaryotic PSI reaction center is composed of at least 11 subunits. P700 is a chlorophyll a/chlorophyll a' dimer, A0 is one or more chlorophyll a, A1 is one or both phylloquinones and FX is a shared 4Fe-4S iron-sulfur center. serves as cofactor.

It localises to the plastid. The protein localises to the chloroplast thylakoid membrane. It catalyses the reaction reduced [plastocyanin] + hnu + oxidized [2Fe-2S]-[ferredoxin] = oxidized [plastocyanin] + reduced [2Fe-2S]-[ferredoxin]. Its function is as follows. PsaA and PsaB bind P700, the primary electron donor of photosystem I (PSI), as well as the electron acceptors A0, A1 and FX. PSI is a plastocyanin-ferredoxin oxidoreductase, converting photonic excitation into a charge separation, which transfers an electron from the donor P700 chlorophyll pair to the spectroscopically characterized acceptors A0, A1, FX, FA and FB in turn. Oxidized P700 is reduced on the lumenal side of the thylakoid membrane by plastocyanin. This is Photosystem I P700 chlorophyll a apoprotein A2 from Vitis vinifera (Grape).